We begin with the raw amino-acid sequence, 206 residues long: Urease accessory protein UreG (206 aa).

14–21 (GPVGSGKT) contributes to the GTP binding site.

This sequence belongs to the SIMIBI class G3E GTPase family. UreG subfamily. In terms of assembly, homodimer. UreD, UreF and UreG form a complex that acts as a GTP-hydrolysis-dependent molecular chaperone, activating the urease apoprotein by helping to assemble the nickel containing metallocenter of UreC. The UreE protein probably delivers the nickel.

It is found in the cytoplasm. Functionally, facilitates the functional incorporation of the urease nickel metallocenter. This process requires GTP hydrolysis, probably effectuated by UreG. The sequence is that of Urease accessory protein UreG from Methylocella silvestris (strain DSM 15510 / CIP 108128 / LMG 27833 / NCIMB 13906 / BL2).